Here is a 231-residue protein sequence, read N- to C-terminus: MAELTKKQKDILVKVESNKCYSINDALNLLKECATAKFDESIDMSINLGIDAKKSDQNVRGAIVLPNGTGKTVCVAVFTQGDNIAKAQDAGADVVGMEDLMKSMQDGDLNYDVVIASPDAMGVVGRLGQVLGPRGLMPNPKVGTVTSDVATAVNNAKTGQVRYRADKAGIVHACVGRVSFNVSALTQNINVLMEALKKIKPSSAKGVYFKKLSISSTMGPGLSVDLASLDI.

This sequence belongs to the universal ribosomal protein uL1 family. In terms of assembly, part of the 50S ribosomal subunit.

In terms of biological role, binds directly to 23S rRNA. The L1 stalk is quite mobile in the ribosome, and is involved in E site tRNA release. Protein L1 is also a translational repressor protein, it controls the translation of the L11 operon by binding to its mRNA. The polypeptide is Large ribosomal subunit protein uL1 (Ruthia magnifica subsp. Calyptogena magnifica).